Here is a 429-residue protein sequence, read N- to C-terminus: Glutamate-1-semialdehyde 2,1-aminomutase 2 (429 aa).

An N6-(pyridoxal phosphate)lysine modification is found at lysine 267.

Belongs to the class-III pyridoxal-phosphate-dependent aminotransferase family. HemL subfamily. In terms of assembly, homodimer. It depends on pyridoxal 5'-phosphate as a cofactor.

It localises to the cytoplasm. The enzyme catalyses (S)-4-amino-5-oxopentanoate = 5-aminolevulinate. It participates in porphyrin-containing compound metabolism; protoporphyrin-IX biosynthesis; 5-aminolevulinate from L-glutamyl-tRNA(Glu): step 2/2. The protein is Glutamate-1-semialdehyde 2,1-aminomutase 2 of Brevibacillus brevis (strain 47 / JCM 6285 / NBRC 100599).